Here is a 237-residue protein sequence, read N- to C-terminus: Uridylate kinase (237 aa).

Residue 12-15 (KLSG) coordinates ATP. Positions 20–25 (GENGYG) are involved in allosteric activation by GTP. Position 54 (G54) interacts with UMP. Residues G55 and R59 each coordinate ATP. UMP contacts are provided by residues D72 and 133 to 140 (TGNPYFST). ATP is bound by residues Y166 and D169.

This sequence belongs to the UMP kinase family. As to quaternary structure, homohexamer.

The protein localises to the cytoplasm. The catalysed reaction is UMP + ATP = UDP + ADP. It participates in pyrimidine metabolism; CTP biosynthesis via de novo pathway; UDP from UMP (UMPK route): step 1/1. With respect to regulation, allosterically activated by GTP. Inhibited by UTP. In terms of biological role, catalyzes the reversible phosphorylation of UMP to UDP. This chain is Uridylate kinase, found in Clostridium tetani (strain Massachusetts / E88).